The following is a 43-amino-acid chain: MKRKIIAIGIFFRLFIIHIHFSHHCCENHFINPLVCLIALFCI.

An N-terminal signal peptide occupies residues 1–22 (MKRKIIAIGIFFRLFIIHIHFS).

This is an uncharacterized protein from Schizosaccharomyces pombe (strain 972 / ATCC 24843) (Fission yeast).